A 158-amino-acid chain; its full sequence is 6,7-dimethyl-8-ribityllumazine synthase (158 aa).

5-amino-6-(D-ribitylamino)uracil contacts are provided by residues F23, 61-63, and 85-87; these read SME and AVI. 90–91 provides a ligand contact to (2S)-2-hydroxy-3-oxobutyl phosphate; sequence DT. The active-site Proton donor is H93. Y118 provides a ligand contact to 5-amino-6-(D-ribitylamino)uracil. R132 contributes to the (2S)-2-hydroxy-3-oxobutyl phosphate binding site.

This sequence belongs to the DMRL synthase family.

It catalyses the reaction (2S)-2-hydroxy-3-oxobutyl phosphate + 5-amino-6-(D-ribitylamino)uracil = 6,7-dimethyl-8-(1-D-ribityl)lumazine + phosphate + 2 H2O + H(+). Its pathway is cofactor biosynthesis; riboflavin biosynthesis; riboflavin from 2-hydroxy-3-oxobutyl phosphate and 5-amino-6-(D-ribitylamino)uracil: step 1/2. Catalyzes the formation of 6,7-dimethyl-8-ribityllumazine by condensation of 5-amino-6-(D-ribitylamino)uracil with 3,4-dihydroxy-2-butanone 4-phosphate. This is the penultimate step in the biosynthesis of riboflavin. This is 6,7-dimethyl-8-ribityllumazine synthase from Prochlorococcus marinus (strain MIT 9211).